Here is a 157-residue protein sequence, read N- to C-terminus: 6,7-dimethyl-8-ribityllumazine synthase (157 aa).

Residues F22, 57–59, and 81–83 each bind 5-amino-6-(D-ribitylamino)uracil; these read AYE and TVI. 86–87 contacts (2S)-2-hydroxy-3-oxobutyl phosphate; sequence GT. The active-site Proton donor is H89. F114 provides a ligand contact to 5-amino-6-(D-ribitylamino)uracil. R128 contributes to the (2S)-2-hydroxy-3-oxobutyl phosphate binding site.

It belongs to the DMRL synthase family. Forms an icosahedral capsid composed of 60 subunits, arranged as a dodecamer of pentamers.

The catalysed reaction is (2S)-2-hydroxy-3-oxobutyl phosphate + 5-amino-6-(D-ribitylamino)uracil = 6,7-dimethyl-8-(1-D-ribityl)lumazine + phosphate + 2 H2O + H(+). It functions in the pathway cofactor biosynthesis; riboflavin biosynthesis; riboflavin from 2-hydroxy-3-oxobutyl phosphate and 5-amino-6-(D-ribitylamino)uracil: step 1/2. Functionally, catalyzes the formation of 6,7-dimethyl-8-ribityllumazine by condensation of 5-amino-6-(D-ribitylamino)uracil with 3,4-dihydroxy-2-butanone 4-phosphate. This is the penultimate step in the biosynthesis of riboflavin. The chain is 6,7-dimethyl-8-ribityllumazine synthase from Histophilus somni (strain 129Pt) (Haemophilus somnus).